We begin with the raw amino-acid sequence, 274 residues long: Putative septum site-determining protein MinD (274 aa).

Position 22–29 (22–29) interacts with ATP; that stretch reads KGGVGKTT.

Belongs to the ParA family. MinD subfamily.

The protein localises to the plastid. It is found in the chloroplast. ATPase required for the correct placement of the division site. The protein is Putative septum site-determining protein MinD (minD-A) of Nephroselmis olivacea (Green alga).